A 481-amino-acid polypeptide reads, in one-letter code: 2-succinylbenzoate--CoA ligase (481 aa).

The protein belongs to the ATP-dependent AMP-binding enzyme family. MenE subfamily.

It catalyses the reaction 2-succinylbenzoate + ATP + CoA = 2-succinylbenzoyl-CoA + AMP + diphosphate. The protein operates within quinol/quinone metabolism; 1,4-dihydroxy-2-naphthoate biosynthesis; 1,4-dihydroxy-2-naphthoate from chorismate: step 5/7. Its pathway is quinol/quinone metabolism; menaquinone biosynthesis. Converts 2-succinylbenzoate (OSB) to 2-succinylbenzoyl-CoA (OSB-CoA). The protein is 2-succinylbenzoate--CoA ligase of Bacillus mycoides (strain KBAB4) (Bacillus weihenstephanensis).